A 633-amino-acid chain; its full sequence is MGNYRWPSKLSKLSLRAKQTNLYRVILIAILCVTFYFVGVWQHSGRGISRSSISNHELTSVPCTFPHQTTPILNFASRHTAPDLPPTITDARVVQIPSCGVEFSEYTPCEFVNRSLNFPRERLIYRERHCPEKHEIVRCRIPAPYGYSLPFRWPESRDVAWFANVPHTELTVEKKNQNWVRYEKDRFLFPGGGTMFPRGADAYIDEIGRLINLKDGSIRTAIDTGCGVASFGAYLMSRNIVTMSFAPRDTHEAQVQFALERGVPAIIGVLASIRLPFPARAFDIAHCSRCLIPWGQYNGTYLIEVDRVLRPGGYWILSGPPINWQRHWKGWERTRDDLNSEQSQIERVARSLCWRKLVQREDLAVWQKPTNHVHCKRNRIALGRPPFCHRTLPNQGWYTKLETCLTPLPEVTGSEIKEVAGGQLARWPERLNALPPRIKSGSLEGITEDEFVSNTEKWQRRVSYYKKYDQQLAETGRYRNFLDMNAHLGGFASALVDDPVWVMNVVPVEASVNTLGVIYERGLIGTYQNWCEAMSTYPRTYDFIHADSVFSLYKDRCDMEDILLEMDRILRPKGSVIIRDDIDVLTKVKKITDAMQWEGRIGDHENGPLEREKILFLVKEYWTAPAPDQSSDP.

Residues 1–24 (MGNYRWPSKLSKLSLRAKQTNLYR) are Cytoplasmic-facing. The helical; Signal-anchor for type II membrane protein transmembrane segment at 25–45 (VILIAILCVTFYFVGVWQHSG) threads the bilayer. The Lumenal portion of the chain corresponds to 46-633 (RGISRSSISN…APAPDQSSDP (588 aa)). N-linked (GlcNAc...) asparagine glycosylation is found at Asn113 and Asn298.

This sequence belongs to the methyltransferase superfamily.

It is found in the golgi apparatus membrane. The polypeptide is Probable methyltransferase PMT15 (Arabidopsis thaliana (Mouse-ear cress)).